The sequence spans 476 residues: Bifunctional protein HldE (476 aa).

The interval 1–318 (MKVTLPDFRR…ENAIRGRAET (318 aa)) is ribokinase. Residue 195-198 (NLSE) coordinates ATP. The active site involves D264. The segment at 344-476 (MTNGIFDILH…IIQSIKNGLG (133 aa)) is cytidylyltransferase.

In the N-terminal section; belongs to the carbohydrate kinase PfkB family. The protein in the C-terminal section; belongs to the cytidylyltransferase family. As to quaternary structure, homodimer.

It catalyses the reaction D-glycero-beta-D-manno-heptose 7-phosphate + ATP = D-glycero-beta-D-manno-heptose 1,7-bisphosphate + ADP + H(+). The enzyme catalyses D-glycero-beta-D-manno-heptose 1-phosphate + ATP + H(+) = ADP-D-glycero-beta-D-manno-heptose + diphosphate. Its pathway is nucleotide-sugar biosynthesis; ADP-L-glycero-beta-D-manno-heptose biosynthesis; ADP-L-glycero-beta-D-manno-heptose from D-glycero-beta-D-manno-heptose 7-phosphate: step 1/4. The protein operates within nucleotide-sugar biosynthesis; ADP-L-glycero-beta-D-manno-heptose biosynthesis; ADP-L-glycero-beta-D-manno-heptose from D-glycero-beta-D-manno-heptose 7-phosphate: step 3/4. Functionally, catalyzes the phosphorylation of D-glycero-D-manno-heptose 7-phosphate at the C-1 position to selectively form D-glycero-beta-D-manno-heptose-1,7-bisphosphate. Its function is as follows. Catalyzes the ADP transfer from ATP to D-glycero-beta-D-manno-heptose 1-phosphate, yielding ADP-D-glycero-beta-D-manno-heptose. The polypeptide is Bifunctional protein HldE (Yersinia enterocolitica serotype O:8 / biotype 1B (strain NCTC 13174 / 8081)).